The primary structure comprises 362 residues: Molybdenum import ATP-binding protein ModC (362 aa).

Residues 1 to 236 (MTASGLYLNL…TQSPTAQGED (236 aa)) form the ABC transporter domain. Residue 36–43 (GPSGSGKT) coordinates ATP. Positions 297–362 (DSTILNKLAA…AQVKSVAIVG (66 aa)) constitute a Mop domain.

Belongs to the ABC transporter superfamily. Molybdate importer (TC 3.A.1.8) family. In terms of assembly, the complex is composed of two ATP-binding proteins (ModC), two transmembrane proteins (ModB) and a solute-binding protein (ModA).

The protein localises to the cell inner membrane. It catalyses the reaction molybdate(out) + ATP + H2O = molybdate(in) + ADP + phosphate + H(+). In terms of biological role, part of the ABC transporter complex ModABC involved in molybdenum import. Responsible for energy coupling to the transport system. The polypeptide is Molybdenum import ATP-binding protein ModC (Saccharophagus degradans (strain 2-40 / ATCC 43961 / DSM 17024)).